Consider the following 85-residue polypeptide: U4-theraphotoxin-Hhn1a (85 aa).

The signal sequence occupies residues 1–22; sequence MKVTLISILTCAAVLVLHTTAA. Residues 23–48 constitute a propeptide that is removed on maturation; the sequence is EELEAESQLMEVGMPDTELAAVDEER. 3 cysteine pairs are disulfide-bonded: Cys52–Cys66, Cys56–Cys77, and Cys71–Cys82.

It belongs to the neurotoxin 12 (Hwtx-2) family. 02 (Hwtx-2) subfamily. Monomer. As to expression, expressed by the venom gland.

The protein localises to the secreted. Its function is as follows. Neurotoxin active on both insects and mammals. The protein is U4-theraphotoxin-Hhn1a of Cyriopagopus hainanus (Chinese bird spider).